Here is a 915-residue protein sequence, read N- to C-terminus: Translation initiation factor IF-2 (915 aa).

Residues 83–94 (QSRRAVEKEQIL) show a composition bias toward basic and acidic residues. 3 disordered regions span residues 83-177 (QSRR…PEPP), 216-280 (EADR…KPAV), and 293-328 (ISGMDDSSGTGSRSKFRKQRKMEREREQEEADLLRE). 2 stretches are compositionally biased toward low complexity: residues 111–129 (VRAAAQPAPVPVAAGEAPS) and 137–164 (APATESAPAVAPAGVPAAEPVSEALSAP). Pro residues predominate over residues 165–177 (LPEPVPEPVPEPP). Over residues 293-305 (ISGMDDSSGTGSR) the composition is skewed to polar residues. The segment covering 314 to 328 (MEREREQEEADLLRE) has biased composition (basic and acidic residues). Positions 412-582 (TRPPVVTIMG…LTEAEMRELK (171 aa)) constitute a tr-type G domain. The interval 421-428 (GHVDHGKT) is G1. Residue 421-428 (GHVDHGKT) participates in GTP binding. The tract at residues 446–450 (GITQH) is G2. Residues 468–471 (DTPG) are G3. GTP is bound by residues 468-472 (DTPGH) and 522-525 (NKMD). The G4 stretch occupies residues 522–525 (NKMD). Positions 558–560 (SAK) are G5.

Belongs to the TRAFAC class translation factor GTPase superfamily. Classic translation factor GTPase family. IF-2 subfamily.

Its subcellular location is the cytoplasm. Functionally, one of the essential components for the initiation of protein synthesis. Protects formylmethionyl-tRNA from spontaneous hydrolysis and promotes its binding to the 30S ribosomal subunits. Also involved in the hydrolysis of GTP during the formation of the 70S ribosomal complex. The chain is Translation initiation factor IF-2 from Chlorobium luteolum (strain DSM 273 / BCRC 81028 / 2530) (Pelodictyon luteolum).